The following is a 261-amino-acid chain: 3-deoxy-manno-octulosonate cytidylyltransferase 1 (261 aa).

The protein belongs to the KdsB family.

Its subcellular location is the cytoplasm. The enzyme catalyses 3-deoxy-alpha-D-manno-oct-2-ulosonate + CTP = CMP-3-deoxy-beta-D-manno-octulosonate + diphosphate. It functions in the pathway nucleotide-sugar biosynthesis; CMP-3-deoxy-D-manno-octulosonate biosynthesis; CMP-3-deoxy-D-manno-octulosonate from 3-deoxy-D-manno-octulosonate and CTP: step 1/1. The protein operates within bacterial outer membrane biogenesis; lipopolysaccharide biosynthesis. In terms of biological role, activates KDO (a required 8-carbon sugar) for incorporation into bacterial lipopolysaccharide in Gram-negative bacteria. This Burkholderia lata (strain ATCC 17760 / DSM 23089 / LMG 22485 / NCIMB 9086 / R18194 / 383) protein is 3-deoxy-manno-octulosonate cytidylyltransferase 1.